A 2071-amino-acid chain; its full sequence is GTPase-activating protein BEM2 (2071 aa).

Disordered stretches follow at residues Met-1–Lys-115 and Ala-171–Pro-195. Composition is skewed to low complexity over residues Pro-16 to Cys-31 and Ser-42 to Asn-55. Residues Ser-62–Tyr-80 are compositionally biased toward polar residues. Low complexity predominate over residues Thr-81–Thr-110. The span at His-181 to Gly-191 shows a compositional bias: polar residues. The Ras-GEF domain maps to Asp-471 to Pro-738. The span at Pro-787 to His-811 shows a compositional bias: polar residues. Disordered regions lie at residues Pro-787–Ala-819, Arg-1645–Ser-1676, and Ser-1702–Lys-1738. Composition is skewed to low complexity over residues Ser-1656–Ser-1676 and Ser-1702–Asn-1726. Residues Ser-1751 to Arg-1853 enclose the PH domain. The region spanning Val-1872–Phe-2070 is the Rho-GAP domain.

Its function is as follows. GTPase-activating protein (GAP) for RHO proteins. Required for polarized growth and maintenance of cell polarity. The chain is GTPase-activating protein BEM2 (BEM2) from Eremothecium gossypii (strain ATCC 10895 / CBS 109.51 / FGSC 9923 / NRRL Y-1056) (Yeast).